We begin with the raw amino-acid sequence, 286 residues long: Pyridoxal kinase PdxY (286 aa).

Substrate-binding positions include Ser-9 and 44–45 (TQ). ATP contacts are provided by residues Asp-111, Ala-143, Glu-148, Lys-181, and 208 to 211 (RPLV). Asp-222 lines the substrate pocket.

Belongs to the pyridoxine kinase family. PdxY subfamily. In terms of assembly, homodimer. Mg(2+) serves as cofactor.

It catalyses the reaction pyridoxal + ATP = pyridoxal 5'-phosphate + ADP + H(+). The protein operates within cofactor metabolism; pyridoxal 5'-phosphate salvage; pyridoxal 5'-phosphate from pyridoxal: step 1/1. Pyridoxal kinase involved in the salvage pathway of pyridoxal 5'-phosphate (PLP). Catalyzes the phosphorylation of pyridoxal to PLP. This is Pyridoxal kinase PdxY from Pectobacterium atrosepticum (strain SCRI 1043 / ATCC BAA-672) (Erwinia carotovora subsp. atroseptica).